Here is a 388-residue protein sequence, read N- to C-terminus: Succinate--CoA ligase [ADP-forming] subunit beta (388 aa).

The 236-residue stretch at 9–244 (KQLFADYGLP…PSQEDPREAH (236 aa)) folds into the ATP-grasp domain. ATP is bound by residues Lys-46, 53–55 (GRG), Glu-99, Thr-102, and Glu-107. Mg(2+) contacts are provided by Asn-199 and Asp-213. Substrate contacts are provided by residues Asn-264 and 321-323 (GIV).

This sequence belongs to the succinate/malate CoA ligase beta subunit family. In terms of assembly, heterotetramer of two alpha and two beta subunits. The cofactor is Mg(2+).

The enzyme catalyses succinate + ATP + CoA = succinyl-CoA + ADP + phosphate. It catalyses the reaction GTP + succinate + CoA = succinyl-CoA + GDP + phosphate. Its pathway is carbohydrate metabolism; tricarboxylic acid cycle; succinate from succinyl-CoA (ligase route): step 1/1. Its function is as follows. Succinyl-CoA synthetase functions in the citric acid cycle (TCA), coupling the hydrolysis of succinyl-CoA to the synthesis of either ATP or GTP and thus represents the only step of substrate-level phosphorylation in the TCA. The beta subunit provides nucleotide specificity of the enzyme and binds the substrate succinate, while the binding sites for coenzyme A and phosphate are found in the alpha subunit. The polypeptide is Succinate--CoA ligase [ADP-forming] subunit beta (Hahella chejuensis (strain KCTC 2396)).